We begin with the raw amino-acid sequence, 209 residues long: Zinc finger SWIM domain-containing protein sws1 (209 aa).

Positions 1 to 30 (MQQGHFTSNSYHSKTLNSSSLPVSSKFSHT) are enriched in polar residues. The disordered stretch occupies residues 1-33 (MQQGHFTSNSYHSKTLNSSSLPVSSKFSHTNDP). An SWIM-type zinc finger spans residues 143–203 (TTIDLKYWYC…HILAASILRA (61 aa)).

As to quaternary structure, interacts with rdl1, rlp1 and srs2.

Its subcellular location is the cytoplasm. The protein localises to the nucleus. The protein resides in the nucleoplasm. Functionally, involved in early stages of the homologous recombination repair (HRR) pathway of double-stranded DNA breaks arising during DNA replication or induced by DNA-damaging agents. The polypeptide is Zinc finger SWIM domain-containing protein sws1 (sws1) (Schizosaccharomyces pombe (strain 972 / ATCC 24843) (Fission yeast)).